The chain runs to 264 residues: Occludin/ELL domain-containing protein 1 (264 aa).

The span at 1-10 shows a compositional bias: polar residues; sequence MHNPDGSASP. The tract at residues 1–112 is disordered; sequence MHNPDGSASP…QPGPHKAKTK (112 aa). Residues 96–105 are compositionally biased toward pro residues; that stretch reads PRPPCQPQPG. One can recognise an OCEL domain in the interval 147–257; that stretch reads PDYELKYPPV…QIQKFDDQGD (111 aa).

The protein belongs to the ELL/occludin family.

The protein is Occludin/ELL domain-containing protein 1 (OCEL1) of Homo sapiens (Human).